The following is a 268-amino-acid chain: Adenosylcobinamide-GDP ribazoletransferase (268 aa).

A run of 6 helical transmembrane segments spans residues 54–74 (IAGL…GVLW), 80–100 (AVVL…DGLS), 124–144 (IGVM…AFLA), 150–170 (WLTA…YGIV), 202–222 (ALAL…VWMV), and 243–263 (GALC…SAPM).

It belongs to the CobS family. Requires Mg(2+) as cofactor.

The protein localises to the cell membrane. It carries out the reaction alpha-ribazole + adenosylcob(III)inamide-GDP = adenosylcob(III)alamin + GMP + H(+). It catalyses the reaction alpha-ribazole 5'-phosphate + adenosylcob(III)inamide-GDP = adenosylcob(III)alamin 5'-phosphate + GMP + H(+). Its pathway is cofactor biosynthesis; adenosylcobalamin biosynthesis; adenosylcobalamin from cob(II)yrinate a,c-diamide: step 7/7. Joins adenosylcobinamide-GDP and alpha-ribazole to generate adenosylcobalamin (Ado-cobalamin). Also synthesizes adenosylcobalamin 5'-phosphate from adenosylcobinamide-GDP and alpha-ribazole 5'-phosphate. This Roseiflexus sp. (strain RS-1) protein is Adenosylcobinamide-GDP ribazoletransferase.